The following is a 119-amino-acid chain: Nucleoid-associated protein Cphy_0047 (119 aa).

The disordered stretch occupies residues 23–45; that stretch reads AQRMQKQMEDKTKEMEEKQWEAT. Residues 28–42 show a composition bias toward basic and acidic residues; it reads KQMEDKTKEMEEKQW.

Belongs to the YbaB/EbfC family. As to quaternary structure, homodimer.

Its subcellular location is the cytoplasm. It is found in the nucleoid. Binds to DNA and alters its conformation. May be involved in regulation of gene expression, nucleoid organization and DNA protection. In Lachnoclostridium phytofermentans (strain ATCC 700394 / DSM 18823 / ISDg) (Clostridium phytofermentans), this protein is Nucleoid-associated protein Cphy_0047.